Reading from the N-terminus, the 326-residue chain is MLIDWFTVVAQALNFLILVWLLKRFLYQPILDAIDAREKRIALELADADTKRADAKRERDEFQQKNEVFDQQRAALLGKAMEEAKTERQRLLDDARHAADALATKRQEALRSAQRSMSEALSHRARDEVFAIARKALGDLATTSLEERMGEVFTRRLREMDAKAKAALGEALKTASEPALVRSAFELPADQRAAIQNAINETFSADIPLHFATAPEVVCGIELSTNGQKVGWSITDYLASLEKGVDELLKERDKAEPQSELTRQIRKRAYELYEQQGRKEGRAVQNWDKAESEIRKENLSPAKTEPPPEAKAKPKPEEPKPEIGSP.

A helical transmembrane segment spans residues 2–22 (LIDWFTVVAQALNFLILVWLL). Basic and acidic residues-rich tracts occupy residues 275–298 (QQGRKEGRAVQNWDKAESEIRKEN) and 306–326 (PPPEAKAKPKPEEPKPEIGSP). Residues 275–326 (QQGRKEGRAVQNWDKAESEIRKENLSPAKTEPPPEAKAKPKPEEPKPEIGSP) are disordered.

The protein belongs to the ATPase B chain family. In terms of assembly, F-type ATPases have 2 components, F(1) - the catalytic core - and F(0) - the membrane proton channel. F(1) has five subunits: alpha(3), beta(3), gamma(1), delta(1), epsilon(1). F(0) has three main subunits: a(1), b(2) and c(10-14). The alpha and beta chains form an alternating ring which encloses part of the gamma chain. F(1) is attached to F(0) by a central stalk formed by the gamma and epsilon chains, while a peripheral stalk is formed by the delta and b chains.

It is found in the cell inner membrane. Functionally, f(1)F(0) ATP synthase produces ATP from ADP in the presence of a proton or sodium gradient. F-type ATPases consist of two structural domains, F(1) containing the extramembraneous catalytic core and F(0) containing the membrane proton channel, linked together by a central stalk and a peripheral stalk. During catalysis, ATP synthesis in the catalytic domain of F(1) is coupled via a rotary mechanism of the central stalk subunits to proton translocation. Its function is as follows. Component of the F(0) channel, it forms part of the peripheral stalk, linking F(1) to F(0). This chain is ATP synthase subunit b 2, found in Albidiferax ferrireducens (strain ATCC BAA-621 / DSM 15236 / T118) (Rhodoferax ferrireducens).